Reading from the N-terminus, the 48-residue chain is Phospholipase A2 TI-Nh (48 aa).

Histidine 25 is a catalytic residue. Aspartate 26 contributes to the Ca(2+) binding site.

The protein belongs to the phospholipase A2 family. Group I subfamily. D49 sub-subfamily. Monomer. Ca(2+) serves as cofactor. In terms of tissue distribution, expressed by the venom gland.

It localises to the secreted. The catalysed reaction is a 1,2-diacyl-sn-glycero-3-phosphocholine + H2O = a 1-acyl-sn-glycero-3-phosphocholine + a fatty acid + H(+). Its function is as follows. Phospholipase A2 with weak enzymatic activity, which partially inhibits thrombin enzymatic activity (Ki=73 nM), completely inhibits thrombin-induced platelet aggregation and retards fibrin clot formation (IC(50)=0.2 nM). May exert this anticoagulant effect through a non-enzymatic mechanism. In Naja haje haje (Egyptian cobra), this protein is Phospholipase A2 TI-Nh.